A 506-amino-acid chain; its full sequence is 2-isopropylmalate synthase (506 aa).

Positions 4-266 (ILFMDTTLRD…EPSMTLKEIK (263 aa)) constitute a Pyruvate carboxyltransferase domain. Residues D13, H201, H203, and N237 each coordinate Mn(2+). A regulatory domain region spans residues 390 to 506 (NITQLQVHFV…KLKSFIQLVK (117 aa)).

Belongs to the alpha-IPM synthase/homocitrate synthase family. LeuA type 1 subfamily. In terms of assembly, homodimer. Mn(2+) serves as cofactor.

Its subcellular location is the cytoplasm. It carries out the reaction 3-methyl-2-oxobutanoate + acetyl-CoA + H2O = (2S)-2-isopropylmalate + CoA + H(+). Its pathway is amino-acid biosynthesis; L-leucine biosynthesis; L-leucine from 3-methyl-2-oxobutanoate: step 1/4. In terms of biological role, catalyzes the condensation of the acetyl group of acetyl-CoA with 3-methyl-2-oxobutanoate (2-ketoisovalerate) to form 3-carboxy-3-hydroxy-4-methylpentanoate (2-isopropylmalate). In Bacillus anthracis (strain A0248), this protein is 2-isopropylmalate synthase.